The sequence spans 215 residues: Porin MspC (215 aa).

The first 31 residues, 1–31 (MKAISRVLIAMISALAAAVAGLFVSAGTSHA), serve as a signal peptide directing secretion.

This sequence belongs to the mycobacterial porin (TC 1.B.24) family. In terms of assembly, octamers. Probably forms a goblet with the wide end on the exterior of the outer membrane and a central channel. It is not known if mixed oligomers of MspC with other Msp subunits form in vivo.

It is found in the cell outer membrane. The protein resides in the secreted. Its subcellular location is the cell wall. Functionally, a constitutively expressed secondary porin, forms a water-filled channel which favors the permeation of cations and less efficiently phosphate. There are about 2400 porins in wild-type, 800 in an mspA deletion and 150 in a double mspA-mspC deletion. In Mycolicibacterium smegmatis (strain ATCC 700084 / mc(2)155) (Mycobacterium smegmatis), this protein is Porin MspC (mspC).